Consider the following 415-residue polypeptide: MKKIKRSAADPDPVYPFGDEVPIPLPPFLVPGGGLTTDGLSLAVQTVDPLNVTLGGVGLKIGDGLSVVDGKLTSEAKIVADPPLQQSGDTLSLSTDSSMMVLPSGQLTINNLPSISVTSSGVGLVSPNAPLQLMSNGALQLSVGGGLTVGAQGSLQISTGVGVNVNAAGVLESYPLPPLVWDYSSKSLTLDIGPGLTVVNGKLQVIGATFSNQMSRMAPAPRADLQSNSIEPLPSPPSKTSLDIAEELQNDKGVSFAFQAREEELGAFTKRTLFAYSGDGLTGPFKAPASAELSSFLTAHPKGRWLIAFPLGTGIVSVDEGILTLEISRSLPEVGSGSSSTSLKVISIYFMDLFFPVPFIDRASHPAPRRSNNSRQLFHSKQRLFLKVKDFKKRSWYSSLFTLINLNIQECPELS.

The protein belongs to the adenoviridae fiber family. In terms of assembly, homotrimer. Interacts (via N-terminal tail region) with pentons.

The protein resides in the virion. It localises to the host nucleus. In terms of biological role, forms spikes that protrude from each vertex of the icosahedral capsid. Interacts with host receptor to provide virion initial attachment to target cell. Fiber proteins are shed during virus entry, when virus is still at the cell surface. The sequence is that of Fiber protein from Pantherophis guttatus (Corn snake).